The chain runs to 291 residues: Putative phosphatase MG263 (291 aa).

Catalysis depends on aspartate 11, which acts as the Nucleophile. Mg(2+) is bound at residue aspartate 11. Leucine 12 serves as a coordination point for phosphate. Aspartate 13 lines the Mg(2+) pocket. Residues 60–61 (TG) and lysine 217 contribute to the phosphate site. Aspartate 241 serves as a coordination point for Mg(2+). Asparagine 244 lines the phosphate pocket.

The protein belongs to the HAD-like hydrolase superfamily. Cof family. Requires Mg(2+) as cofactor.

The polypeptide is Putative phosphatase MG263 (Mycoplasma genitalium (strain ATCC 33530 / DSM 19775 / NCTC 10195 / G37) (Mycoplasmoides genitalium)).